The following is a 234-amino-acid chain: Segregation and condensation protein A (234 aa).

Belongs to the ScpA family. In terms of assembly, component of a cohesin-like complex composed of ScpA, ScpB and the Smc homodimer, in which ScpA and ScpB bind to the head domain of Smc. The presence of the three proteins is required for the association of the complex with DNA.

Its subcellular location is the cytoplasm. Its function is as follows. Participates in chromosomal partition during cell division. May act via the formation of a condensin-like complex containing Smc and ScpB that pull DNA away from mid-cell into both cell halves. The protein is Segregation and condensation protein A of Streptococcus pyogenes serotype M6 (strain ATCC BAA-946 / MGAS10394).